The sequence spans 222 residues: Large ribosomal subunit protein uL1 (222 aa).

The protein belongs to the universal ribosomal protein uL1 family. Part of the 50S ribosomal subunit.

Its function is as follows. Binds directly to 23S rRNA. Probably involved in E site tRNA release. In terms of biological role, protein L1 is also a translational repressor protein, it controls the translation of its operon by binding to its mRNA. The polypeptide is Large ribosomal subunit protein uL1 (Pyrobaculum neutrophilum (strain DSM 2338 / JCM 9278 / NBRC 100436 / V24Sta) (Thermoproteus neutrophilus)).